The primary structure comprises 90 residues: MPHGHLRQALSPTSWTCEGLLLLLGLLVLFFHHHNQSAVERRRRVSFVEADRLPHESGWYSSDDDGDRDGDEETGESHNRNSVGLSAVFS.

The helical transmembrane segment at 15 to 34 (WTCEGLLLLLGLLVLFFHHH) threads the bilayer. Positions 55 to 90 (HESGWYSSDDDGDRDGDEETGESHNRNSVGLSAVFS) are disordered. A compositionally biased stretch (acidic residues) spans 62–74 (SDDDGDRDGDEET). Residues 80 to 90 (RNSVGLSAVFS) show a composition bias toward polar residues.

The protein resides in the host membrane. The protein is Protein RL8A (RL8A) of Homo sapiens (Human).